Here is a 147-residue protein sequence, read N- to C-terminus: UPF0735 ACT domain-containing protein ABC1543 (147 aa).

An ACT domain is found at 70–145; the sequence is TFSINLADRS…SVERVELVGS (76 aa).

The protein belongs to the UPF0735 family.

The sequence is that of UPF0735 ACT domain-containing protein ABC1543 from Shouchella clausii (strain KSM-K16) (Alkalihalobacillus clausii).